Here is a 431-residue protein sequence, read N- to C-terminus: Serine--tRNA ligase (431 aa).

Residues 41-66 (QSRTQELQAERNARSKSIGEAARRGE) are disordered. 240 to 242 (TSE) contacts L-serine. 271-273 (RSE) lines the ATP pocket. Glu294 contacts L-serine. Residue 358–361 (EISS) participates in ATP binding. Ser392 lines the L-serine pocket.

It belongs to the class-II aminoacyl-tRNA synthetase family. Type-1 seryl-tRNA synthetase subfamily. Homodimer. The tRNA molecule binds across the dimer.

It is found in the cytoplasm. The catalysed reaction is tRNA(Ser) + L-serine + ATP = L-seryl-tRNA(Ser) + AMP + diphosphate + H(+). The enzyme catalyses tRNA(Sec) + L-serine + ATP = L-seryl-tRNA(Sec) + AMP + diphosphate + H(+). Its pathway is aminoacyl-tRNA biosynthesis; selenocysteinyl-tRNA(Sec) biosynthesis; L-seryl-tRNA(Sec) from L-serine and tRNA(Sec): step 1/1. Catalyzes the attachment of serine to tRNA(Ser). Is also able to aminoacylate tRNA(Sec) with serine, to form the misacylated tRNA L-seryl-tRNA(Sec), which will be further converted into selenocysteinyl-tRNA(Sec). This chain is Serine--tRNA ligase, found in Aeromonas hydrophila subsp. hydrophila (strain ATCC 7966 / DSM 30187 / BCRC 13018 / CCUG 14551 / JCM 1027 / KCTC 2358 / NCIMB 9240 / NCTC 8049).